The sequence spans 590 residues: O-fucosyltransferase 2 (590 aa).

Residues 1–16 are compositionally biased toward basic and acidic residues; it reads MGQERPNDEERPESRD. The disordered stretch occupies residues 1–26; that stretch reads MGQERPNDEERPESRDLGVYGCSPPH. The chain crosses the membrane as a helical; Signal-anchor for type II membrane protein span at residues 67-87; it reads TAIGVMAILGFFCLVNWFMLS. N125 carries N-linked (GlcNAc...) asparagine glycosylation. Substrate is bound at residue 365 to 367; the sequence is HLR. 2 N-linked (GlcNAc...) asparagine glycosylation sites follow: N485 and N546.

This sequence belongs to the glycosyltransferase GT106 family.

The protein localises to the membrane. It participates in glycan metabolism. The polypeptide is O-fucosyltransferase 2 (Arabidopsis thaliana (Mouse-ear cress)).